The primary structure comprises 428 residues: Putative zinc metalloprotease SAS1196 (428 aa).

Residue His21 participates in Zn(2+) binding. Glu22 is an active-site residue. His25 is a binding site for Zn(2+). Transmembrane regions (helical) follow at residues 172–194 (FLTL…IGLA), 309–331 (GSTL…GFSF), 352–374 (IISL…LIPI), and 401–420 (TTII…LVTW). Residues 186–269 (ALVLFIGLAY…TKSVELTPKK (84 aa)) enclose the PDZ domain.

The protein belongs to the peptidase M50B family. The cofactor is Zn(2+).

The protein localises to the cell membrane. In Staphylococcus aureus (strain MSSA476), this protein is Putative zinc metalloprotease SAS1196.